A 383-amino-acid polypeptide reads, in one-letter code: Deoxyguanosinetriphosphate triphosphohydrolase-like protein (383 aa).

Residues R62–I198 form the HD domain.

This sequence belongs to the dGTPase family. Type 2 subfamily.

The polypeptide is Deoxyguanosinetriphosphate triphosphohydrolase-like protein (Rickettsia prowazekii (strain Madrid E)).